We begin with the raw amino-acid sequence, 521 residues long: tRNA (adenine(58)-N(1))-methyltransferase non-catalytic subunit trm6 (521 aa).

3 disordered regions span residues 1–24 (METETPMDVETKSTTSNTNDNNNN), 305–336 (IYDKQVKEKEKEKEKDENVKDEKESGEEAKTI), and 452–521 (QKST…KIDE). A compositionally biased stretch (low complexity) spans 12–24 (KSTTSNTNDNNNN). Basic and acidic residues predominate over residues 308–334 (KQVKEKEKEKEKDENVKDEKESGEEAK). Low complexity-rich tracts occupy residues 452 to 476 (QKSTTTTTTTTTTTTNNSINPTKTT) and 487 to 502 (DATTSSSSSSTAAATT). Basic and acidic residues predominate over residues 510–521 (SESALKKRKIDE).

Belongs to the TRM6/GCD10 family. Heterotetramer; composed of two copies of trmt6 and two copies of trmt61a.

It localises to the nucleus. Functionally, substrate-binding subunit of tRNA (adenine-N(1)-)-methyltransferase, which catalyzes the formation of N(1)-methyladenine at position 58 (m1A58) in initiator methionyl-tRNA. The polypeptide is tRNA (adenine(58)-N(1))-methyltransferase non-catalytic subunit trm6 (trmt6) (Dictyostelium discoideum (Social amoeba)).